An 84-amino-acid chain; its full sequence is Putative membrane protein insertion efficiency factor (84 aa).

It belongs to the UPF0161 family.

The protein resides in the cell inner membrane. Could be involved in insertion of integral membrane proteins into the membrane. This chain is Putative membrane protein insertion efficiency factor, found in Nostoc sp. (strain PCC 7120 / SAG 25.82 / UTEX 2576).